Consider the following 128-residue polypeptide: Iron-sulfur cluster insertion protein ErpA (128 aa).

Cys-56, Cys-120, and Cys-122 together coordinate iron-sulfur cluster.

The protein belongs to the HesB/IscA family. In terms of assembly, homodimer. It depends on iron-sulfur cluster as a cofactor.

Required for insertion of 4Fe-4S clusters for at least IspG. This is Iron-sulfur cluster insertion protein ErpA from Xanthomonas oryzae pv. oryzae (strain MAFF 311018).